The primary structure comprises 279 residues: Acyl-[acyl-carrier-protein]--UDP-N-acetylglucosamine O-acyltransferase (279 aa).

Belongs to the transferase hexapeptide repeat family. LpxA subfamily. Homotrimer.

It is found in the cytoplasm. The enzyme catalyses a (3R)-hydroxyacyl-[ACP] + UDP-N-acetyl-alpha-D-glucosamine = a UDP-3-O-[(3R)-3-hydroxyacyl]-N-acetyl-alpha-D-glucosamine + holo-[ACP]. The protein operates within glycolipid biosynthesis; lipid IV(A) biosynthesis; lipid IV(A) from (3R)-3-hydroxytetradecanoyl-[acyl-carrier-protein] and UDP-N-acetyl-alpha-D-glucosamine: step 1/6. In terms of biological role, involved in the biosynthesis of lipid A, a phosphorylated glycolipid that anchors the lipopolysaccharide to the outer membrane of the cell. The chain is Acyl-[acyl-carrier-protein]--UDP-N-acetylglucosamine O-acyltransferase from Chlamydia pneumoniae (Chlamydophila pneumoniae).